Consider the following 342-residue polypeptide: MHRTTRIKITELNPHLMCALCGGYFIDATTIVECLHSFCKTCIVRYLETNKYCPMCDVQVHKTRPLLSIRSDKTLQDIVYKLVPGLFKDEMKRRRDFYAAYPLTEVPNGSNEDRGEVLEQEKGALGDDEIVSLSIEFYEGVRDREEKKNLTENGDGDKEKTGVRFLRCPAAMTVMHLAKFLRNKMDVPSKYKVEILYEDEPLKEYYTLMDIAYIYPWRRNGPLPLKYRVQPACKRLTLPTVPTPSEGTNTSGASECESVSDKAPSPATLPATSSSLPSPATPSHGSPSSHGPPATHPTSPTPPSTAAGTTTATNGGTSNCLQTPSSTSRGRKMTVNGAPCPP.

An RING-type zinc finger spans residues 18–57 (CALCGGYFIDATTIVECLHSFCKTCIVRYLETNKYCPMCD). Glycyl lysine isopeptide (Lys-Gly) (interchain with G-Cter in SUMO2) cross-links involve residues lysine 51 and lysine 88. Positions 81–95 (KLVPGLFKDEMKRRR) match the Nuclear localization signal motif. Phosphothreonine; by PKA is present on threonine 237. A disordered region spans residues 237–342 (TLPTVPTPSE…MTVNGAPCPP (106 aa)). Residues 243-253 (TPSEGTNTSGA) show a composition bias toward polar residues. Residues 263–318 (APSPATLPATSSSLPSPATPSHGSPSSHGPPATHPTSPTPPSTAAGTTTATNGGTS) are compositionally biased toward low complexity. The span at 319 to 328 (NCLQTPSSTS) shows a compositional bias: polar residues. Residue threonine 334 is modified to Phosphothreonine; by PKA.

In terms of assembly, exists as both a monomer and homodimer. Component of a PRC1-like complex. Interacts with CBX8, RING1 and RNF2. Interacts with CBX7. Interacts with PHC2. Phosphorylated. Homodimer formation is regulated by phosphorylation with only unphosphorylated proteins forming homodimers. As to expression, expressed in embryonic stem cells. Expressed in a variety of tumor cells and in neural tissues.

It is found in the nucleus. Transcriptional repressor. Binds specifically to the DNA sequence 5'-GACTNGACT-3'. Has tumor suppressor activity. May play a role in control of cell proliferation and/or neural cell development. Regulates proliferation of early T progenitor cells by maintaining expression of HES1. Also plays a role in antero-posterior specification of the axial skeleton and negative regulation of the self-renewal activity of hematopoietic stem cells. Component of a Polycomb group (PcG) multiprotein PRC1-like complex, a complex class required to maintain the transcriptionally repressive state of many genes, including Hox genes, throughout development. PcG PRC1 complex acts via chromatin remodeling and modification of histones; it mediates monoubiquitination of histone H2A 'Lys-119', rendering chromatin heritably changed in its expressibility. Within the PRC1-like complex, regulates RNF2 ubiquitin ligase activity. This is Polycomb group RING finger protein 2 (Pcgf2) from Mus musculus (Mouse).